A 103-amino-acid polypeptide reads, in one-letter code: Host transcription reprogramming factor 6 (103 aa).

The N-terminal stretch at 1-19 (MRATTAFQVIAFLAVGAAA) is a signal peptide. Residues 66–92 (YWCPNQVCAKTFATQEERDHHIANTVH) form a C2H2-type zinc finger. Residues 82 to 103 (ERDHHIANTVHPTNSKRDVLLQ) are disordered.

The protein localises to the secreted. It is found in the host nucleus. Functionally, probable secreted effector that translocates into the nuclei of host cells to reprogram the expression of targeted genes by binding on effector binding elements in rice. The sequence is that of Host transcription reprogramming factor 6 from Pyricularia oryzae (strain 70-15 / ATCC MYA-4617 / FGSC 8958) (Rice blast fungus).